Consider the following 944-residue polypeptide: Neutral alpha-glucosidase AB (944 aa).

A signal peptide spans 1 to 28 (MAAVAAVAARRRRSWASLVLAFLGVCLG). Cys-41 and Cys-47 are disulfide-bonded. Phosphoserine is present on Ser-52. The N-linked (GlcNAc...) asparagine glycan is linked to Asn-97. The disordered stretch occupies residues 181–238 (QRAPRVSQGSKDPAEGDGAQPEETPRDGDKPEETQGKAEKDEPGAWEETFKTHSDSKP). Over residues 203 to 236 (ETPRDGDKPEETQGKAEKDEPGAWEETFKTHSDS) the composition is skewed to basic and acidic residues. Positions 283 and 429 each coordinate substrate. Asp-542 serves as the catalytic Nucleophile. Residue Arg-602 coordinates substrate. Asp-618 acts as the Proton donor in catalysis. Residues Cys-633 and Cys-644 are joined by a disulfide bond. A substrate-binding site is contributed by His-676.

Belongs to the glycosyl hydrolase 31 family. In terms of assembly, heterodimer of a catalytic alpha subunit (GANAB) and a beta subunit (PRKCSH). Binds glycosylated PTPRC. In terms of tissue distribution, detected in placenta. Isoform 1 and isoform 2 are expressed in the kidney and liver.

Its subcellular location is the endoplasmic reticulum. The protein resides in the golgi apparatus. The protein localises to the melanosome. It catalyses the reaction N(4)-(alpha-D-Glc-(1-&gt;3)-alpha-D-Man-(1-&gt;2)-alpha-D-Man-(1-&gt;2)-alpha-D-Man-(1-&gt;3)-[alpha-D-Man-(1-&gt;2)-alpha-D-Man-(1-&gt;3)-[alpha-D-Man-(1-&gt;2)-alpha-D-Man-(1-&gt;6)]-alpha-D-Man-(1-&gt;6)]-beta-D-Man-(1-&gt;4)-beta-D-GlcNAc-(1-&gt;4)-beta-D-GlcNAc)-L-asparaginyl-[protein] + H2O = N(4)-(alpha-D-Man-(1-&gt;2)-alpha-D-Man-(1-&gt;2)-alpha-D-Man-(1-&gt;3)-[alpha-D-Man-(1-&gt;2)-alpha-D-Man-(1-&gt;3)-[alpha-D-Man-(1-&gt;2)-alpha-D-Man-(1-&gt;6)]-alpha-D-Man-(1-&gt;6)]-beta-D-Man-(1-&gt;4)-beta-D-GlcNAc-(1-&gt;4)-beta-D-GlcNAc)-L-asparaginyl-[protein] (N-glucan mannose isomer 9A1,2,3B1,2,3) + beta-D-glucose. It carries out the reaction N(4)-(alpha-D-Glc-(1-&gt;3)-alpha-D-Glc-(1-&gt;3)-alpha-D-Man-(1-&gt;2)-alpha-D-Man-(1-&gt;2)-alpha-D-Man-(1-&gt;3)-[alpha-D-Man-(1-&gt;2)-alpha-D-Man-(1-&gt;3)-[alpha-D-Man-(1-&gt;2)-alpha-D-Man-(1-&gt;6)]-alpha-D-Man-(1-&gt;6)]-beta-D-Man-(1-&gt;4)-beta-D-GlcNAc-(1-&gt;4)-beta-D-GlcNAc)-L-asparaginyl-[protein] + H2O = N(4)-(alpha-D-Glc-(1-&gt;3)-alpha-D-Man-(1-&gt;2)-alpha-D-Man-(1-&gt;2)-alpha-D-Man-(1-&gt;3)-[alpha-D-Man-(1-&gt;2)-alpha-D-Man-(1-&gt;3)-[alpha-D-Man-(1-&gt;2)-alpha-D-Man-(1-&gt;6)]-alpha-D-Man-(1-&gt;6)]-beta-D-Man-(1-&gt;4)-beta-D-GlcNAc-(1-&gt;4)-beta-D-GlcNAc)-L-asparaginyl-[protein] + beta-D-glucose. It functions in the pathway glycan metabolism; N-glycan metabolism. Its activity is regulated as follows. Inhibited by deoxynojirimycin. Catalytic subunit of glucosidase II that cleaves sequentially the 2 innermost alpha-1,3-linked glucose residues from the Glc(2)Man(9)GlcNAc(2) oligosaccharide precursor of immature glycoproteins. Required for PKD1/Polycystin-1 and PKD2/Polycystin-2 maturation and localization to the cell surface and cilia. The chain is Neutral alpha-glucosidase AB from Homo sapiens (Human).